The following is a 519-amino-acid chain: Asteroid homolog 1 (519 aa).

It belongs to the asteroid family.

The protein localises to the cytoplasm. It localises to the mitochondrion. This Schizosaccharomyces pombe (strain 972 / ATCC 24843) (Fission yeast) protein is Asteroid homolog 1 (ast1).